We begin with the raw amino-acid sequence, 592 residues long: Protein kinase C zeta type (592 aa).

The PB1 domain maps to 15–98; sequence RVRLKAHYGG…EGLIIHVFPS (84 aa). Residues 79–145 are interaction with SQSTM1; the sequence is AFRLARQCRD…KRFNRRAYCG (67 aa). Residues 130-180 form a Phorbol-ester/DAG-type zinc finger; it reads GHLFQAKRFNRRAYCGQCSERIWGLARQGYRCINCKLLVHKRCHGLVPLTC. The region spanning 252-518 is the Protein kinase domain; the sequence is FDLIRVIGRG…FSDIKSHAFF (267 aa). Residues 258–266 and Lys-281 each bind ATP; that span reads IGRGSYAKV. Asp-376 functions as the Proton acceptor in the catalytic mechanism. The residue at position 410 (Thr-410) is a Phosphothreonine; by PDPK1 and PI3K. The AGC-kinase C-terminal domain maps to 519 to 590; the sequence is RSIDWDLLEK…INPLLLSTEE (72 aa). Thr-560 is modified (phosphothreonine). Position 591 is a phosphoserine (Ser-591).

Belongs to the protein kinase superfamily. AGC Ser/Thr protein kinase family. PKC subfamily. In terms of assembly, forms a ternary complex with SQSTM1 and KCNAB2. Forms another ternary complex with SQSTM1 and GABRR3. Forms a complex with SQSTM1 and MAP2K5. Interacts with PARD6A, PARD6B, PARD6G and SQSTM1. Part of a complex with PARD3, PARD6A or PARD6B or PARD6G and CDC42 or RAC1. Interacts with ADAP1/CENTA1. Forms a ternary complex composed of SQSTM1 and PAWR. Interacts directly with SQSTM1. Interacts with IKBKB. Interacts (via the protein kinase domain) with WWC1. Forms a tripartite complex with WWC1 and DDR1, but predominantly in the absence of collagen. Component of the Par polarity complex, composed of at least phosphorylated PRKCZ, PARD3 and TIAM1. Interacts with PDPK1 (via N-terminal region). Interacts with WDFY2 (via WD repeats 1-3). Interacts with VAMP2. Forms a complex with WDFY2 and VAMP2. Interacts with APPL1. Interacts with WWC1, WWC2 and WWC3. CDH5 is required for its phosphorylation at Thr-410. Phosphorylated by protein kinase PDPK1; phosphorylation is inhibited by the apoptotic C-terminal cleavage product of PKN2. Phosphorylation at Thr-410 by PI3K activates the kinase. As to expression, expressed in brain, and to a lesser extent in lung, kidney and testis.

Its subcellular location is the cytoplasm. The protein localises to the endosome. The protein resides in the cell junction. It localises to the membrane. The enzyme catalyses L-seryl-[protein] + ATP = O-phospho-L-seryl-[protein] + ADP + H(+). The catalysed reaction is L-threonyl-[protein] + ATP = O-phospho-L-threonyl-[protein] + ADP + H(+). Atypical PKCs (PRKCI and PRKCZ) exhibit an elevated basal enzymatic activity (that may be due to the interaction with SMG1 or SQSTM1) and are not regulated by diacylglycerol, phosphatidylserine, phorbol esters or calcium ions. Two specific sites, Thr-410 (activation loop of the kinase domain) and Thr-560 (turn motif), need to be phosphorylated for its full activation. Phosphatidylinositol 3,4,5-trisphosphate might be a physiological activator. Isoform 2: Constitutively active. Functionally, calcium- and diacylglycerol-independent serine/threonine-protein kinase that functions in phosphatidylinositol 3-kinase (PI3K) pathway and mitogen-activated protein (MAP) kinase cascade, and is involved in NF-kappa-B activation, mitogenic signaling, cell proliferation, cell polarity, inflammatory response and maintenance of long-term potentiation (LTP). Upon lipopolysaccharide (LPS) treatment in macrophages, or following mitogenic stimuli, functions downstream of PI3K to activate MAP2K1/MEK1-MAPK1/ERK2 signaling cascade independently of RAF1 activation. Required for insulin-dependent activation of AKT3, but may function as an adapter rather than a direct activator. Upon insulin treatment may act as a downstream effector of PI3K and contribute to the activation of translocation of the glucose transporter SLC2A4/GLUT4 and subsequent glucose transport in adipocytes. In EGF-induced cells, binds and activates MAP2K5/MEK5-MAPK7/ERK5 independently of its kinase activity and can activate JUN promoter through MEF2C. Through binding with SQSTM1/p62, functions in interleukin-1 signaling and activation of NF-kappa-B with the specific adapters RIPK1 and TRAF6. Participates in TNF-dependent transactivation of NF-kappa-B by phosphorylating and activating IKBKB kinase, which in turn leads to the degradation of NF-kappa-B inhibitors. In migrating astrocytes, forms a cytoplasmic complex with PARD6A and is recruited by CDC42 to function in the establishment of cell polarity along with the microtubule motor and dynein. In association with FEZ1, stimulates neuronal differentiation in PC12 cells. In the inflammatory response, is required for the T-helper 2 (Th2) differentiation process, including interleukin production, efficient activation of JAK1 and the subsequent phosphorylation and nuclear translocation of STAT6. May be involved in development of allergic airway inflammation (asthma), a process dependent on Th2 immune response. In the NF-kappa-B-mediated inflammatory response, can relieve SETD6-dependent repression of NF-kappa-B target genes by phosphorylating the RELA subunit at 'Ser-311'. Phosphorylates VAMP2 in vitro. Phosphorylates and activates LRRK1, which phosphorylates RAB proteins involved in intracellular trafficking. In terms of biological role, involved in late synaptic long term potention phase in CA1 hippocampal cells and long term memory maintenance. This Homo sapiens (Human) protein is Protein kinase C zeta type (PRKCZ).